We begin with the raw amino-acid sequence, 426 residues long: Stationary phase-inducible protein CsiE (426 aa).

2 consecutive PRD domains span residues 120-225 (ARNF…DPLR) and 229-336 (QRDR…ENDL).

This Escherichia coli (strain K12) protein is Stationary phase-inducible protein CsiE (csiE).